The sequence spans 190 residues: Secretory phospholipase A2 (190 aa).

Residues 1-15 (MKLAYFSSLLPLALA) form the signal peptide. A disulfide bridge links cysteine 62 with cysteine 78. Alanine 65 lines the Ca(2+) pocket. Histidine 81 is a catalytic residue. Residue aspartate 82 coordinates Ca(2+).

It belongs to the phospholipase A2 family. It depends on Ca(2+) as a cofactor.

The protein resides in the lipid droplet. It is found in the secreted. The enzyme catalyses a 1,2-diacyl-sn-glycero-3-phosphocholine + H2O = a 1-acyl-sn-glycero-3-phosphocholine + a fatty acid + H(+). Its function is as follows. Secretory phospholipase that catalyzes the calcium-dependent hydrolysis of the 2-acyl groups in 3-sn-phosphoglycerides. Increases the ability to utilize insect-derived nutrients and lipids, and promotes lipid dropplets accumulation. Plays a role in virulence, including more efficient penetration of the insect cuticle and evasion of host immune response by repressing the expression of host immunity genes. This is Secretory phospholipase A2 from Beauveria bassiana (strain ARSEF 2860) (White muscardine disease fungus).